Here is a 236-residue protein sequence, read N- to C-terminus: 2-C-methyl-D-erythritol 4-phosphate cytidylyltransferase (236 aa).

It belongs to the IspD/TarI cytidylyltransferase family. IspD subfamily. As to quaternary structure, homodimer.

The catalysed reaction is 2-C-methyl-D-erythritol 4-phosphate + CTP + H(+) = 4-CDP-2-C-methyl-D-erythritol + diphosphate. Its pathway is isoprenoid biosynthesis; isopentenyl diphosphate biosynthesis via DXP pathway; isopentenyl diphosphate from 1-deoxy-D-xylulose 5-phosphate: step 2/6. In terms of biological role, catalyzes the formation of 4-diphosphocytidyl-2-C-methyl-D-erythritol from CTP and 2-C-methyl-D-erythritol 4-phosphate (MEP). The polypeptide is 2-C-methyl-D-erythritol 4-phosphate cytidylyltransferase (Salmonella paratyphi B (strain ATCC BAA-1250 / SPB7)).